We begin with the raw amino-acid sequence, 190 residues long: Probable nicotinate-nucleotide adenylyltransferase (190 aa).

Belongs to the NadD family.

It catalyses the reaction nicotinate beta-D-ribonucleotide + ATP + H(+) = deamido-NAD(+) + diphosphate. It functions in the pathway cofactor biosynthesis; NAD(+) biosynthesis; deamido-NAD(+) from nicotinate D-ribonucleotide: step 1/1. Functionally, catalyzes the reversible adenylation of nicotinate mononucleotide (NaMN) to nicotinic acid adenine dinucleotide (NaAD). The chain is Probable nicotinate-nucleotide adenylyltransferase from Myxococcus xanthus (strain DK1622).